A 65-amino-acid polypeptide reads, in one-letter code: Large ribosomal subunit protein bL35 (65 aa).

Positions 1–65 (MPKMKTNRAA…GRLDRMLPYL (65 aa)) are disordered. Residues 10–44 (AAKRFRKTASGKYKAGHANRSHILTKKATKRKRNL) are compositionally biased toward basic residues. Residues 50-65 (VRAEDAGRLDRMLPYL) show a composition bias toward basic and acidic residues.

This sequence belongs to the bacterial ribosomal protein bL35 family.

This is Large ribosomal subunit protein bL35 from Xylella fastidiosa (strain M12).